The chain runs to 430 residues: Inactive metallocarboxypeptidase ECM14 (430 aa).

The first 24 residues, 1–24 (MLHMNSLWGCFLFVLLAVTGAVQG), serve as a signal peptide directing secretion. A propeptide spanning residues 25–105 (LQEDYSEYAV…TLPTSQMMAR (81 aa)) is cleaved from the precursor. A glycan (N-linked (GlcNAc...) asparagine) is linked at Asn41. A Peptidase M14 domain is found at 120 to 425 (EYRDLDTIYM…AALKYFCDFL (306 aa)). Residues His182 and Glu185 each contribute to the Zn(2+) site. Substrate is bound by residues 182–185 (HARE), Arg240, and 257–258 (DH). Cys251 and Cys272 form a disulfide bridge. Asn295 is a glycosylation site (N-linked (GlcNAc...) asparagine). Residue His310 coordinates Zn(2+). 311 to 312 (SY) contributes to the substrate binding site.

The protein belongs to the peptidase M14 family. Zn(2+) is required as a cofactor. N-glycosylated.

The protein localises to the vacuole. It is found in the secreted. Its function is as follows. Inactive carboxypeptidase that may play a role in cell wall organization and biogenesis. The polypeptide is Inactive metallocarboxypeptidase ECM14 (Saccharomyces cerevisiae (strain ATCC 204508 / S288c) (Baker's yeast)).